The chain runs to 351 residues: Ion-translocating oxidoreductase complex subunit D (351 aa).

The next 3 helical transmembrane spans lie at 37–57 (YFFG…AILA), 88–108 (AIPP…AIVI), and 123–143 (PAMA…TTWL). The residue at position 187 (Thr-187) is an FMN phosphoryl threonine. Transmembrane regions (helical) follow at residues 214 to 234 (FAGL…LFLL), 241 to 261 (WHIP…FAVF), 270 to 290 (IFNL…TDPV), and 300 to 317 (LYYG…RSWG).

The protein belongs to the NqrB/RnfD family. The complex is composed of six subunits: RnfA, RnfB, RnfC, RnfD, RnfE and RnfG. The cofactor is FMN.

The protein localises to the cell inner membrane. Part of a membrane-bound complex that couples electron transfer with translocation of ions across the membrane. This Aliivibrio salmonicida (strain LFI1238) (Vibrio salmonicida (strain LFI1238)) protein is Ion-translocating oxidoreductase complex subunit D.